We begin with the raw amino-acid sequence, 227 residues long: Basic leucine zipper 24 (227 aa).

The interval 44-68 is disordered; that stretch reads EDKDQDRVTRGCSHTHSCNPPGPED. Positions 94–160 constitute a bZIP domain; it reads DSSNKKRLCG…IRLRALLVEM (67 aa). Residues 98–118 are basic motif; that stretch reads KKRLCGNREAVRKYREKKKAR. The segment at 122–129 is leucine-zipper; it reads LEDEVMRL.

As to quaternary structure, homodimer. Expressed in young leaves and cauline leaves.

The protein resides in the nucleus. It localises to the cytoplasm. Transcription factor involved in the regulation of salt stress response. Functions as a negative transcriptional regulator of salt stress acclimation response by regulating cation homeostasis. Negatively regulates the expression of genes contributing to ion and osmotic homeostasis during salt stress, such as the Na(+) transporter HKT1, the Na(+)/H(+) antiporter SOS1, the aquaporin PIP2-1 and the glutamine synthetase GLN1-3. In addition, targets genes with functions in plant growth and development, such as argonaute 4 (AGO4) and cyclophilin 19 (CYP19). This Arabidopsis thaliana (Mouse-ear cress) protein is Basic leucine zipper 24.